Here is a 272-residue protein sequence, read N- to C-terminus: MGIKTFAPRSHGRRGMTGFDFKEITKTTPEKSLLAPLKKQAARNNHGQITIRHQGGGHKRKYRLVDFKRNKLEVAAKVIAIEYDPNRTCRIALISYIDGAKAYILAPVGLNVGDTVISSDKADIKPGNSLTLGAIPVGTVIHNIELRPGKGGQICRGAGASATLAGKGDKYCQVRMPSGELKQVLTVCRASIGQVGNTDNENINLGKAGRSRWRGIRPSVRGMHMNPVDHPLGGGEGVGKGHHPVTPWGQPCKGFKTRNNKRTNSSIIKRRK.

Residues 247–272 (PWGQPCKGFKTRNNKRTNSSIIKRRK) form a disordered region. A compositionally biased stretch (polar residues) spans 262–272 (RTNSSIIKRRK).

The protein belongs to the universal ribosomal protein uL2 family. Part of the 50S ribosomal subunit. Forms a bridge to the 30S subunit in the 70S ribosome.

In terms of biological role, one of the primary rRNA binding proteins. Required for association of the 30S and 50S subunits to form the 70S ribosome, for tRNA binding and peptide bond formation. It has been suggested to have peptidyltransferase activity; this is somewhat controversial. Makes several contacts with the 16S rRNA in the 70S ribosome. This chain is Large ribosomal subunit protein uL2, found in Bdellovibrio bacteriovorus (strain ATCC 15356 / DSM 50701 / NCIMB 9529 / HD100).